Here is a 300-residue protein sequence, read N- to C-terminus: ADP-ribosyl cyclase/cyclic ADP-ribose hydrolase 1 (300 aa).

Topologically, residues 1 to 21 are cytoplasmic; that stretch reads MANCEFSPVSGDKPCCRLSRR. The chain crosses the membrane as a helical; Signal-anchor for type II membrane protein span at residues 22–42; it reads AQLCLGVSILVLILVVVLAVV. The Extracellular segment spans residues 43–300; the sequence is VPRWRQQWSG…PEDSSCTSEI (258 aa). Disulfide bonds link cysteine 67-cysteine 82, cysteine 99-cysteine 180, and cysteine 160-cysteine 173. A glycan (N-linked (GlcNAc...) asparagine) is linked at asparagine 100. Residue cysteine 119 is part of the active site. Asparagine 164 is a glycosylation site (N-linked (GlcNAc...) asparagine). Cysteine 201 is an active-site residue. Asparagine 209 and asparagine 219 each carry an N-linked (GlcNAc...) asparagine glycan. 2 cysteine pairs are disulfide-bonded: cysteine 254–cysteine 275 and cysteine 287–cysteine 296.

This sequence belongs to the ADP-ribosyl cyclase family. Homodimer. In terms of tissue distribution, expressed at high levels in pancreas, liver, kidney, brain, testis, ovary, placenta, malignant lymphoma and neuroblastoma.

It is found in the cell surface. Its subcellular location is the membrane. The enzyme catalyses 2'-phospho-cyclic ADP-ribose + nicotinate = nicotinate-adenine dinucleotide phosphate. It carries out the reaction NAD(+) = cyclic ADP-beta-D-ribose + nicotinamide + H(+). The catalysed reaction is NAD(+) + H2O = ADP-D-ribose + nicotinamide + H(+). It catalyses the reaction cyclic ADP-beta-D-ribose + H2O = ADP-D-ribose. The enzyme catalyses NADP(+) = 2'-phospho-cyclic ADP-ribose + nicotinamide. It carries out the reaction nicotinate + NADP(+) = nicotinate-adenine dinucleotide phosphate + nicotinamide. Its activity is regulated as follows. ATP inhibits the cADPR hydrolyzing activity. In terms of biological role, synthesizes cyclic ADP-ribose (cADPR), a second messenger for glucose-induced insulin secretion. Synthesizes the Ca(2+) mobilizer nicotinate-adenine dinucleotide phosphate, NAADP(+), from 2'-phospho-cADPR and nicotinic acid, as well as from NADP(+) and nicotinic acid. At both pH 5.0 and pH 7.4 preferentially transforms 2'-phospho-cADPR into NAADP(+), while preferentially cleaving NADP(+) to cADPR and ADPRP rather than into NADDP(+). Has cADPR hydrolase activity. The sequence is that of ADP-ribosyl cyclase/cyclic ADP-ribose hydrolase 1 (CD38) from Homo sapiens (Human).